Consider the following 417-residue polypeptide: Lissencephaly-1 homolog (417 aa).

The LisH domain maps to Q7–G39. Residues T54–F86 adopt a coiled-coil conformation. 7 WD repeats span residues G120–T159, G162–T203, G204–T243, G246–V285, G288–V340, G343–T382, and A385–R417.

The protein belongs to the WD repeat LIS1/nudF family.

The protein localises to the cytoplasm. It is found in the cytoskeleton. The protein resides in the microtubule organizing center. Its subcellular location is the centrosome. Positively regulates the activity of the minus-end directed microtubule motor protein dynein. May enhance dynein-mediated microtubule sliding by targeting dynein to the microtubule plus end. Required for several dynein- and microtubule-dependent processes. This chain is Lissencephaly-1 homolog, found in Schistosoma mansoni (Blood fluke).